Reading from the N-terminus, the 133-residue chain is Nickel-responsive regulator (133 aa).

Ni(2+) is bound by residues His-76, His-87, His-89, and Cys-95.

This sequence belongs to the transcriptional regulatory CopG/NikR family. Homotetramer. Ni(2+) is required as a cofactor.

Functionally, transcriptional repressor of the nikABCDE operon. Is active in the presence of excessive concentrations of intracellular nickel. In Salmonella arizonae (strain ATCC BAA-731 / CDC346-86 / RSK2980), this protein is Nickel-responsive regulator.